The sequence spans 1425 residues: Nephrocystin-4 (1425 aa).

Serine 145 bears the Phosphoserine mark. The interval 448–554 is disordered; that stretch reads FSLSSDGPTE…VSHLEADLSQ (107 aa). Low complexity-rich tracts occupy residues 473-484 and 507-530; these read PASPSGTPAPAA and SPLS…SQSP. The tract at residues 822 to 1425 is sufficient for basal bodies localization; that stretch reads LTLANVGHAC…ETFCVKVLYQ (604 aa).

This sequence belongs to the NPHP4 family. As to quaternary structure, interacts with NPHP1 and RPGRIP1L/NPHP8; NPHP1, NPHP4 and RPGRIP1L are proposed to form a functional NPHP1-4-8 module localized to cell-cell contacts and the ciliary transition zone; NPHP4 mediates the interaction between NPHP1 and RPGRIP1L. Interacts with IQCB1/NPHP5; the interaction likely requires additional interactors. Interacts with RPGRIP1, CEP164, JADE1, PALS1, INADL, PARD6A, INVS, DVL2. Interacts with INTU; INTU mediates the interaction between NPHP4 and DAAM1. Interacts with JADE1. Interacts with SPATA7. Expressed in the retina (at protein level).

The protein resides in the cytoplasm. It is found in the cytoskeleton. Its subcellular location is the cilium basal body. It localises to the microtubule organizing center. The protein localises to the centrosome. The protein resides in the cell junction. It is found in the tight junction. In terms of biological role, involved in the organization of apical junctions; the function is proposed to implicate a NPHP1-4-8 module. Does not seem to be strictly required for ciliogenesis. Required for building functional cilia. Involved in the organization of the subapical actin network in multiciliated epithelial cells. Seems to recruit INT to basal bodies of motile cilia which subsequently interacts with actin-modifying proteins such as DAAM1. In cooperation with INVS may down-regulate the canonical Wnt pathway and promote the Wnt-PCP pathway by regulating expression and subcellular location of disheveled proteins. Stabilizes protein levels of JADE1 and promotes its translocation to the nucleus leading to cooperative inhibition of canonical Wnt signaling. Acts as negative regulator of the hippo pathway by association with LATS1 and modifying LATS1-dependent phosphorylation and localization of WWTR1/TAZ. The polypeptide is Nephrocystin-4 (Nphp4) (Mus musculus (Mouse)).